Reading from the N-terminus, the 275-residue chain is Caspase-3 (275 aa).

The residue at position 1 (M1) is an N-acetylmethionine. 2 consecutive propeptides follow at residues 1-9 and 10-28; these read MENTENSVD and SKSIKTSETKILHGSKSMD. K11 bears the N6-acetyllysine mark. Residue S26 is modified to Phosphoserine. Residues H121 and C163 contribute to the active site. C163 carries the S-nitrosocysteine; in inhibited form modification.

It belongs to the peptidase C14A family. Heterotetramer that consists of two anti-parallel arranged heterodimers, each one formed by a 17 kDa (p17) and a 12 kDa (p12) subunit. Interacts with BIRC6/bruce. In terms of processing, cleavage by granzyme B, caspase-6, caspase-8 and caspase-10 generates the two active subunits. Additional processing of the propeptides is likely due to the autocatalytic activity of the activated protease. Active heterodimers between the small subunit of caspase-7 protease and the large subunit of caspase-3 also occur and vice versa. Post-translationally, S-nitrosylated on its catalytic site cysteine in unstimulated cell lines and denitrosylated upon activation of the Fas apoptotic pathway, associated with an increase in intracellular caspase activity. Fas therefore activates caspase-3 not only by inducing the cleavage of the caspase zymogen to its active subunits, but also by stimulating the denitrosylation of its active site thiol. Ubiquitinated by BIRC6; this activity is inhibited by DIABLO/SMAC.

It is found in the cytoplasm. The enzyme catalyses Strict requirement for an Asp residue at positions P1 and P4. It has a preferred cleavage sequence of Asp-Xaa-Xaa-Asp-|- with a hydrophobic amino-acid residue at P2 and a hydrophilic amino-acid residue at P3, although Val or Ala are also accepted at this position.. Its activity is regulated as follows. Inhibited by BIRC6; following inhibition of BIRC6-caspase binding by DIABLO/SMAC, BIRC6 is subjected to caspase cleavage, leading to an increase in active caspases. Involved in the activation cascade of caspases responsible for apoptosis execution. At the onset of apoptosis, it proteolytically cleaves poly(ADP-ribose) polymerase PARP1 at a '216-Asp-|-Gly-217' bond. Cleaves and activates sterol regulatory element binding proteins (SREBPs) between the basic helix-loop-helix leucine zipper domain and the membrane attachment domain. Cleaves and activates caspase-6, -7 and -9 (CASP6, CASP7 and CASP9, respectively). Cleaves and inactivates interleukin-18 (IL18). Triggers cell adhesion in sympathetic neurons through RET cleavage. Cleaves IL-1 beta between an Asp and an Ala, releasing the mature cytokine which is involved in a variety of inflammatory processes. Cleaves and inhibits serine/threonine-protein kinase AKT1 in response to oxidative stress. Acts as an inhibitor of type I interferon production during virus-induced apoptosis by mediating cleavage of antiviral proteins CGAS, IRF3 and MAVS, thereby preventing cytokine overproduction. Also involved in pyroptosis by mediating cleavage and activation of gasdermin-E (GSDME). Cleaves XRCC4 and phospholipid scramblase proteins XKR4, XKR8 and XKR9, leading to promote phosphatidylserine exposure on apoptotic cell surface. Cleaves BIRC6 following inhibition of BIRC6-caspase binding by DIABLO/SMAC. The sequence is that of Caspase-3 (CASP3) from Bos taurus (Bovine).